The chain runs to 150 residues: Protein Turandot X1/X2 (150 aa).

Residues 1–22 (MRLYIGSLLICVLLGIVPFATA) form the signal peptide. The segment at 127–150 (REEGQSNHANSPTTSPSRIQKMTK) is disordered. Polar residues predominate over residues 132–150 (SNHANSPTTSPSRIQKMTK).

This sequence belongs to the Turandot family.

It localises to the secreted. In terms of biological role, a humoral factor that may play a role in stress tolerance. This is Protein Turandot X1/X2 from Drosophila sechellia (Fruit fly).